We begin with the raw amino-acid sequence, 911 residues long: Transferrin-binding protein A (911 aa).

An N-terminal signal peptide occupies residues 1 to 24 (MQQQHLFRLNILCLSLMTALPAYA). The TonB box signature appears at 38-45 (DTIQVKAK). In terms of domain architecture, TBDR plug spans 51–176 (RDNEVTGLGK…LAGSVAFQTK (126 aa)). The TBDR beta-barrel domain occupies 187 to 911 (QWGIQSKTAY…NYTFSLEMKF (725 aa)). The TonB C-terminal box signature appears at 894–911 (NRYAAPGRNYTFSLEMKF).

This sequence belongs to the TonB-dependent receptor family. Binds both human apo- and holo-transferrin (TF), via the TF C-terminus. Forms a large complex with TF and TbpB.

It localises to the cell outer membrane. Functionally, neisseria acquires iron by extracting it from serum transferrin (TF) in its human host. Acts as a TF receptor and is required for TF utilization. Binds both apo- and holo-TF, via the TF C-terminus. The chain is Transferrin-binding protein A from Neisseria meningitidis serogroup B.